Here is a 681-residue protein sequence, read N- to C-terminus: Long-chain-fatty-acid--CoA ligase heimdall (681 aa).

Residues 223 to 231 (TSGTVGMPK), 414 to 419 (ECYGMS), D491, R506, and K639 contribute to the ATP site.

Belongs to the ATP-dependent AMP-binding enzyme family. Bubblegum subfamily.

It carries out the reaction a long-chain fatty acid + ATP + CoA = a long-chain fatty acyl-CoA + AMP + diphosphate. Mediates activation of long-chain fatty acids for both synthesis of cellular lipids, and degradation via beta-oxidation. Probably by regulating lipid storage and catabolism, plays a role in neuronal function. This is Long-chain-fatty-acid--CoA ligase heimdall from Drosophila melanogaster (Fruit fly).